The following is a 333-amino-acid chain: tRNA-dihydrouridine(16) synthase (333 aa).

FMN-binding positions include 19–21 (PMQ) and glutamine 80. Residue cysteine 110 is the Proton donor of the active site. Residues lysine 151, 211–213 (NGD), and 235–236 (GR) contribute to the FMN site.

It belongs to the Dus family. DusC subfamily. Requires FMN as cofactor.

The enzyme catalyses 5,6-dihydrouridine(16) in tRNA + NADP(+) = uridine(16) in tRNA + NADPH + H(+). It catalyses the reaction 5,6-dihydrouridine(16) in tRNA + NAD(+) = uridine(16) in tRNA + NADH + H(+). Its function is as follows. Catalyzes the synthesis of 5,6-dihydrouridine (D), a modified base found in the D-loop of most tRNAs, via the reduction of the C5-C6 double bond in target uridines. Specifically modifies U16 in tRNAs. The chain is tRNA-dihydrouridine(16) synthase from Neisseria meningitidis serogroup A / serotype 4A (strain DSM 15465 / Z2491).